Here is a 475-residue protein sequence, read N- to C-terminus: MVPQTETRAGAGFKAGVKDYRLTYYTPDYVVKDTDILAAFRMTPQPGVPPEECGAAVAAESSTGTWTTVWTDGLTTLDRYKGRCYDIEPVPGEDNQYIAYVAYPIDLFEEGSVTNLFTSIVGNVFGFKALRALRLEDLRIPPAYVKTFQGPPHGIQVERDKLNKYGRGLLGCTIKPKLGLSAKNYGRAVYECLRGGLDFTKDDENVNSQPFMRWRDRFLFVAEATYKAQSETGEIKGHYLNATAATCEEMLKRAQCAKELGVPIIMHDYLTGGFTANTSLSSYCRDHGLLLHIHRAMHAVIDRQRNHGIHFRVLAKALRLSGGDHLHSGTVVGKLEGEREVTLGFVDLMRDDYIEKDRSRGIYFTQDWCSMGGTMPVASGGIHVWHMPALVEIFGDDACLQFGGGTLGHPWGNAPGAVANRVALEACTQARNEGRDLAREGGDVIRSACKWSPELAAACEVWKEIKFEFETIDKL.

A propeptide spanning residues 1-2 is cleaved from the precursor; that stretch reads MV. Pro3 bears the N-acetylproline mark. Position 14 is an N6,N6,N6-trimethyllysine (Lys14). Positions 123 and 173 each coordinate substrate. The active-site Proton acceptor is the Lys175. Lys177 contacts substrate. Mg(2+)-binding residues include Lys201, Asp203, and Glu204. Lys201 is subject to N6-carboxylysine. His294 functions as the Proton acceptor in the catalytic mechanism. Substrate-binding residues include Arg295, His327, and Ser379.

This sequence belongs to the RuBisCO large chain family. Type I subfamily. As to quaternary structure, heterohexadecamer of 8 large chains and 8 small chains; disulfide-linked. The disulfide link is formed within the large subunit homodimers. Requires Mg(2+) as cofactor. The disulfide bond which can form in the large chain dimeric partners within the hexadecamer appears to be associated with oxidative stress and protein turnover.

The protein localises to the plastid. It localises to the chloroplast. It carries out the reaction 2 (2R)-3-phosphoglycerate + 2 H(+) = D-ribulose 1,5-bisphosphate + CO2 + H2O. It catalyses the reaction D-ribulose 1,5-bisphosphate + O2 = 2-phosphoglycolate + (2R)-3-phosphoglycerate + 2 H(+). In terms of biological role, ruBisCO catalyzes two reactions: the carboxylation of D-ribulose 1,5-bisphosphate, the primary event in carbon dioxide fixation, as well as the oxidative fragmentation of the pentose substrate in the photorespiration process. Both reactions occur simultaneously and in competition at the same active site. The protein is Ribulose bisphosphate carboxylase large chain of Tetradesmus obliquus (Green alga).